The sequence spans 125 residues: Fluoride-specific ion channel FluC (125 aa).

The next 4 helical transmembrane spans lie at 5 to 25 (LLVA…GALV), 29 to 49 (LGAG…FLIG), 66 to 86 (LFLA…SYET), and 95 to 115 (VGKA…LAFL). Residues glycine 74 and threonine 77 each coordinate Na(+).

Belongs to the fluoride channel Fluc/FEX (TC 1.A.43) family.

Its subcellular location is the cell inner membrane. The catalysed reaction is fluoride(in) = fluoride(out). Na(+) is not transported, but it plays an essential structural role and its presence is essential for fluoride channel function. Fluoride-specific ion channel. Important for reducing fluoride concentration in the cell, thus reducing its toxicity. The chain is Fluoride-specific ion channel FluC from Thermus thermophilus (strain ATCC 27634 / DSM 579 / HB8).